The primary structure comprises 364 residues: Aminomethyltransferase (364 aa).

The protein belongs to the GcvT family. In terms of assembly, the glycine cleavage system is composed of four proteins: P, T, L and H.

The enzyme catalyses N(6)-[(R)-S(8)-aminomethyldihydrolipoyl]-L-lysyl-[protein] + (6S)-5,6,7,8-tetrahydrofolate = N(6)-[(R)-dihydrolipoyl]-L-lysyl-[protein] + (6R)-5,10-methylene-5,6,7,8-tetrahydrofolate + NH4(+). Its function is as follows. The glycine cleavage system catalyzes the degradation of glycine. This is Aminomethyltransferase from Shewanella pealeana (strain ATCC 700345 / ANG-SQ1).